Consider the following 392-residue polypeptide: NAC domain-containing protein 58 (392 aa).

In terms of domain architecture, NAC spans 9–173 (LPPGFRFHPT…DWVLCRIYKK (165 aa)). Residues 317 to 345 (STSAGAVVEPPAVTGKRKRSSDGGEPTIQ) are disordered.

As to expression, expressed in leaves, nodes, internodes and mature seeds. Highly expressed in roots. Expressed in leaf sheaths, flag leaves and inflorescences. Expressed in primary and lateral roots, particularly in the vascular tissues. Expressed in the primary phloem of the culm and leaf sheaths. Expressed principally in the primary phloem and in the peripheral zone of the leaf vascular bundles. Expressed in the floral tissues.

It is found in the nucleus. Its function is as follows. Transcription factor that acts as a positive regulator of the jasmonate (JA) pathway to mediate leaf senescence. May directly regulate LOX2, AOC, AOS2, AOC1 and OPR7, which are genes involved in the biosynthesis of JA. Regulates positively leaf senescence by directly targeting senescence-associated genes (SAGs) related to chlorophyll degradation, nutrient transport and other genes associated with abscisic acid-induced leaf senescence. Transcription activator that plays a role in mediating abiotic stress responses through the abscisic acid (ABA) pathway. Possesses transcriptional activator activity in yeast. This chain is NAC domain-containing protein 58, found in Oryza sativa subsp. japonica (Rice).